The sequence spans 190 residues: dCTP deaminase (190 aa).

Residues 113–118 (KSTYAR), 137–139 (TLE), Q158, Y172, and Q182 each bind dCTP. The active-site Proton donor/acceptor is the E139.

The protein belongs to the dCTP deaminase family. As to quaternary structure, homotrimer.

It catalyses the reaction dCTP + H2O + H(+) = dUTP + NH4(+). Its pathway is pyrimidine metabolism; dUMP biosynthesis; dUMP from dCTP (dUTP route): step 1/2. Catalyzes the deamination of dCTP to dUTP. This Chromobacterium violaceum (strain ATCC 12472 / DSM 30191 / JCM 1249 / CCUG 213 / NBRC 12614 / NCIMB 9131 / NCTC 9757 / MK) protein is dCTP deaminase.